We begin with the raw amino-acid sequence, 122 residues long: uncharacterized protein (122 aa).

A helical transmembrane segment spans residues 9 to 25; sequence AFPSPVFLGGVFFVFFF.

It is found in the cytoplasm. The protein localises to the nucleus. It localises to the membrane. This is an uncharacterized protein from Saccharomyces cerevisiae (strain ATCC 204508 / S288c) (Baker's yeast).